Consider the following 137-residue polypeptide: Protein yippee-like F37A8.5 (137 aa).

A disordered region spans residues 1–20; the sequence is MHFRMKVLENSSKHNTPKKQ. The 98-residue stretch at 32 to 129 folds into the Yippee domain; the sequence is RCYSCIHCRA…IELAHMVKDN (98 aa). Zn(2+)-binding residues include Cys-36, Cys-39, Cys-92, and Cys-95.

This sequence belongs to the yippee family.

The chain is Protein yippee-like F37A8.5 from Caenorhabditis elegans.